We begin with the raw amino-acid sequence, 636 residues long: ATP-dependent zinc metalloprotease FtsH (636 aa).

Topologically, residues 1-12 are cytoplasmic; the sequence is MKKLLENLSLWM. The chain crosses the membrane as a helical span at residues 13–33; it reads GIIILVTLLFGQVALNFGFGI. At 34-104 the chain is on the periplasmic side; that stretch reads RNEKIQFSEF…VASGDSFLGL (71 aa). Residues 105–125 traverse the membrane as a helical segment; sequence LFNILISWFPMLLLIGVWIFF. Residues 126–636 are Cytoplasmic-facing; the sequence is MKQMQAGGNK…ESDLDTGDKE (511 aa). 197–204 is an ATP binding site; sequence GPPGTGKT. Histidine 419 is a Zn(2+) binding site. The active site involves glutamate 420. 2 residues coordinate Zn(2+): histidine 423 and aspartate 497.

The protein in the central section; belongs to the AAA ATPase family. In the C-terminal section; belongs to the peptidase M41 family. In terms of assembly, homohexamer. Zn(2+) serves as cofactor.

It is found in the cell inner membrane. Functionally, acts as a processive, ATP-dependent zinc metallopeptidase for both cytoplasmic and membrane proteins. Plays a role in the quality control of integral membrane proteins. The sequence is that of ATP-dependent zinc metalloprotease FtsH from Neorickettsia risticii (strain Illinois).